Here is a 300-residue protein sequence, read N- to C-terminus: Iron/alpha-ketoglutarate-dependent dioxygenase okaE (300 aa).

His134, Asp136, and His210 together coordinate Fe cation.

This sequence belongs to the PhyH family. In terms of assembly, homodimer. Fe cation is required as a cofactor.

The enzyme catalyses okaramine A + 2-oxoglutarate + AH2 + O2 = 12-deshydroxyl okaramine E + succinate + A + CO2 + H2O. The catalysed reaction is 12-deshydroxyl okaramine E + 2-oxoglutarate + O2 = okaramine E + succinate + CO2. It catalyses the reaction okaramine A + 2-oxoglutarate + O2 = okaramine E + succinate + CO2. It participates in alkaloid biosynthesis. The protein operates within secondary metabolite biosynthesis; terpenoid biosynthesis. In terms of biological role, iron/alpha-ketoglutarate-dependent dioxygenase; part of the gene cluster that mediates the biosynthesis of okaramine B, a prenylated indole alkaloid that possesses an unusual octacyclic ring system, including a four-membered azetidine ring and an eight-membered azocine ring, and that exhibits insecticidal activity against silkworm larvae. Within the pathway, okaE forms the unusual 2-dimethyl-3-methyl-azetidine ring to yield 12-deshydroxyl okaramine E from okaramine A. OkaE also catalyzes the hydroxylation of 12-deshydroxyl okaramine E to produce okaramine E. The biosynthesis begins with the NRPS okaA that condenses two tryptophan molecules into cyclo(L-Trp-L-Trp). Prenylation by the prenyltransferase okaC then leads to the formation of cyclo(N8-(alpha,alpha-dimethylallyl)-L-Trp-6a-(alpha,alpha-dime-thylallyl)-L-Trp). This is followed by indole 2,3-epoxidation by the FAD-dependent monooxygenase okaB to facilitate the formation of the hexahydropyrrolo[2,3-b]indole (HPI) moiety of okaramine C. The cytochrome P450 monooxygenase okaD then likely catalyzes formation of the eight-membered ring of okaramine A. The dioxygenase okaE further forms the unusual 2-dimethyl-3-methyl-azetidine ring to yield 12-deshydroxyl okaramine E, as well as the hydroxylation of 12-deshydroxyl okaramine E to produce okaramine E. The cytochrome P450 monoxygenase okaG converts 12-deshydroxyl okaramine E into 3-desmethyl okaramine B which is further methylated by the methyltransferase okaF into okaramine B. In a shunt pathway, okaG and okaF together are also able to convert okaramine E into okaramine D. Okaramine H is produced by nonenzymatic conversion from okaramine A. The protein is Iron/alpha-ketoglutarate-dependent dioxygenase okaE of Penicillium ochrochloron.